A 157-amino-acid polypeptide reads, in one-letter code: Transcription elongation factor GreA (157 aa).

Residues 1 to 60 form a disordered region; that stretch reads MEKVPMTSAGFAALGEELKKRQSEDRPRIIEHIAEARSHGDLSENAEYHAAKEEQSHNEG. Positions 16 to 60 are enriched in basic and acidic residues; it reads EELKKRQSEDRPRIIEHIAEARSHGDLSENAEYHAAKEEQSHNEG. Residues 46–73 are a coiled coil; it reads AEYHAAKEEQSHNEGRIAELEDKLARAD.

Belongs to the GreA/GreB family.

Functionally, necessary for efficient RNA polymerase transcription elongation past template-encoded arresting sites. The arresting sites in DNA have the property of trapping a certain fraction of elongating RNA polymerases that pass through, resulting in locked ternary complexes. Cleavage of the nascent transcript by cleavage factors such as GreA or GreB allows the resumption of elongation from the new 3'terminus. GreA releases sequences of 2 to 3 nucleotides. This is Transcription elongation factor GreA from Bradyrhizobium diazoefficiens (strain JCM 10833 / BCRC 13528 / IAM 13628 / NBRC 14792 / USDA 110).